A 134-amino-acid polypeptide reads, in one-letter code: ATP synthase epsilon chain (134 aa).

It belongs to the ATPase epsilon chain family. F-type ATPases have 2 components, CF(1) - the catalytic core - and CF(0) - the membrane proton channel. CF(1) has five subunits: alpha(3), beta(3), gamma(1), delta(1), epsilon(1). CF(0) has three main subunits: a, b and c.

The protein localises to the cell inner membrane. Its function is as follows. Produces ATP from ADP in the presence of a proton gradient across the membrane. In Rhizobium meliloti (strain 1021) (Ensifer meliloti), this protein is ATP synthase epsilon chain.